A 265-amino-acid chain; its full sequence is MPFELPQQPAPELPERWCVFNGSLLWLQDNQLPAQPPAGCALTGQRFLGIHEGSNLFLADLVGDMPAQAGEWLPLRPALLAMPMAQVQAAARAAQLRQFFHSHRFCGHCATPLAVSADQLGRHCPSCGQVYYPRISPAMMVLVRRGRELLLARSPHFAPGMYSALAGFVEPGETLEECVHRETWEEVGVKVKNLRYAFSQSWPFPHSLMLAFIAEYDGGDIRPQEGEIEDAGWFDIDALPGLPMPISIAHRLIRHACDRIRDLEA.

Arg-76 is a substrate binding site. Positions 106, 109, 124, and 127 each coordinate Zn(2+). Residue Tyr-132 coordinates substrate. Residues 133-256 (PRISPAMMVL…SIAHRLIRHA (124 aa)) form the Nudix hydrolase domain. Ala-166, Glu-182, and Glu-186 together coordinate a divalent metal cation. The short motif at 167 to 188 (GFVEPGETLEECVHRETWEEVG) is the Nudix box element. 200–207 (QSWPFPHS) contributes to the substrate binding site. Position 227 (Glu-227) interacts with a divalent metal cation. Ala-249 contributes to the substrate binding site.

The protein belongs to the Nudix hydrolase family. NudC subfamily. As to quaternary structure, homodimer. The cofactor is Mg(2+). Mn(2+) is required as a cofactor. Zn(2+) serves as cofactor.

It catalyses the reaction a 5'-end NAD(+)-phospho-ribonucleoside in mRNA + H2O = a 5'-end phospho-adenosine-phospho-ribonucleoside in mRNA + beta-nicotinamide D-ribonucleotide + 2 H(+). It carries out the reaction NAD(+) + H2O = beta-nicotinamide D-ribonucleotide + AMP + 2 H(+). The catalysed reaction is NADH + H2O = reduced beta-nicotinamide D-ribonucleotide + AMP + 2 H(+). Its function is as follows. mRNA decapping enzyme that specifically removes the nicotinamide adenine dinucleotide (NAD) cap from a subset of mRNAs by hydrolyzing the diphosphate linkage to produce nicotinamide mononucleotide (NMN) and 5' monophosphate mRNA. The NAD-cap is present at the 5'-end of some mRNAs and stabilizes RNA against 5'-processing. Has preference for mRNAs with a 5'-end purine. Catalyzes the hydrolysis of a broad range of dinucleotide pyrophosphates. This Chromobacterium violaceum (strain ATCC 12472 / DSM 30191 / JCM 1249 / CCUG 213 / NBRC 12614 / NCIMB 9131 / NCTC 9757 / MK) protein is NAD-capped RNA hydrolase NudC.